A 270-amino-acid polypeptide reads, in one-letter code: Formamidopyrimidine-DNA glycosylase (270 aa).

The active-site Schiff-base intermediate with DNA is Pro2. The active-site Proton donor is the Glu3. Residue Lys59 is the Proton donor; for beta-elimination activity of the active site. Residues His91, Arg110, and Lys151 each coordinate DNA. The FPG-type zinc-finger motif lies at 236–270 (RVYGRDKEPCVTCGQQVKSKVLGGRNTFWCSRCQK). Catalysis depends on Arg260, which acts as the Proton donor; for delta-elimination activity.

The protein belongs to the FPG family. In terms of assembly, monomer. Zn(2+) serves as cofactor.

The enzyme catalyses Hydrolysis of DNA containing ring-opened 7-methylguanine residues, releasing 2,6-diamino-4-hydroxy-5-(N-methyl)formamidopyrimidine.. It catalyses the reaction 2'-deoxyribonucleotide-(2'-deoxyribose 5'-phosphate)-2'-deoxyribonucleotide-DNA = a 3'-end 2'-deoxyribonucleotide-(2,3-dehydro-2,3-deoxyribose 5'-phosphate)-DNA + a 5'-end 5'-phospho-2'-deoxyribonucleoside-DNA + H(+). In terms of biological role, involved in base excision repair of DNA damaged by oxidation or by mutagenic agents. Acts as a DNA glycosylase that recognizes and removes damaged bases. Has a preference for oxidized purines, such as 7,8-dihydro-8-oxoguanine (8-oxoG). Has AP (apurinic/apyrimidinic) lyase activity and introduces nicks in the DNA strand. Cleaves the DNA backbone by beta-delta elimination to generate a single-strand break at the site of the removed base with both 3'- and 5'-phosphates. This is Formamidopyrimidine-DNA glycosylase from Bdellovibrio bacteriovorus (strain ATCC 15356 / DSM 50701 / NCIMB 9529 / HD100).